We begin with the raw amino-acid sequence, 70 residues long: Large ribosomal subunit protein bL31 (70 aa).

Zn(2+) contacts are provided by cysteine 16, cysteine 18, cysteine 37, and cysteine 40.

This sequence belongs to the bacterial ribosomal protein bL31 family. Type A subfamily. As to quaternary structure, part of the 50S ribosomal subunit. The cofactor is Zn(2+).

Its function is as follows. Binds the 23S rRNA. This Proteus mirabilis (strain HI4320) protein is Large ribosomal subunit protein bL31.